Consider the following 163-residue polypeptide: Biotin carboxyl carrier protein of acetyl-CoA carboxylase (163 aa).

The Biotinyl-binding domain maps to 85 to 161; the sequence is GDFIVSPLVG…QFGSKLFRIV (77 aa). Lys127 bears the N6-biotinyllysine mark.

In terms of assembly, homodimer.

It participates in lipid metabolism; fatty acid biosynthesis. Its function is as follows. This protein is a component of the acetyl coenzyme A carboxylase complex; first, biotin carboxylase catalyzes the carboxylation of the carrier protein and then the transcarboxylase transfers the carboxyl group to form malonyl-CoA. The protein is Biotin carboxyl carrier protein of acetyl-CoA carboxylase (accB) of Chlamydia muridarum (strain MoPn / Nigg).